We begin with the raw amino-acid sequence, 482 residues long: Serine decarboxylase 1 (482 aa).

The tract at residues 36 to 55 (EVESPPRPAEEEGEGSPTRR) is disordered. A substrate-binding site is contributed by histidine 200. Lysine 312 is subject to N6-(pyridoxal phosphate)lysine.

Belongs to the group II decarboxylase family. Pyridoxal 5'-phosphate serves as cofactor.

It catalyses the reaction L-serine + H(+) = ethanolamine + CO2. Catalyzes the biosynthesis of ethanolamine from serine. Decarboxylation of free serine is the major source of ethanolamine production in plants and ethanolamine metabolism is crucial for the synthesis of choline, phosphatidylethanolamine (PE) and phosphatidylcholine (PC), and thus for plant growth. The chain is Serine decarboxylase 1 (SDC1) from Oryza sativa subsp. japonica (Rice).